Here is a 310-residue protein sequence, read N- to C-terminus: MKKTLKRILFSSLSLSMLLLLTGCVSVDKAGKPYGVIWNTLGVPMANLITYFAQHQGLGFGVAIIIVTVIVRVVILPLGLYQSWKASYQAEKMAYFKPLFEPINERLRNAKTQEEKLAAQTELMTAQRENGLSMFGGIGCLPLLIQMPFFSAIFFAARYTPGVSSATFLGLNLGQKSLTLTVIIAILYFVQSWLSMQGVPDEQRQQMKTMMYLMPIMMVFMSISLPASVALYWFIGGIFSIIQQLVTTYVLKPKLRRKVEEEYTKNPPKAYKANNARKDVTNSTKATESNQAIITSKKTNRNAGKQKRRG.

A signal peptide spans 1–23 (MKKTLKRILFSSLSLSMLLLLTG). The N-palmitoyl cysteine moiety is linked to residue C24. C24 carries S-diacylglycerol cysteine lipidation. 5 consecutive transmembrane segments (helical) span residues 33–53 (PYGV…TYFA), 58–78 (LGFG…ILPL), 135–155 (FGGI…AIFF), 180–200 (LTVI…QGVP), and 219–239 (VFMS…GGIF). The segment at 266-310 (NPPKAYKANNARKDVTNSTKATESNQAIITSKKTNRNAGKQKRRG) is disordered. The span at 281–297 (TNSTKATESNQAIITSK) shows a compositional bias: polar residues. Over residues 298 to 310 (KTNRNAGKQKRRG) the composition is skewed to basic residues.

The protein belongs to the OXA1/ALB3/YidC family. Type 2 subfamily.

Its subcellular location is the cell membrane. Functionally, required for the insertion and/or proper folding and/or complex formation of integral membrane proteins into the membrane. Involved in integration of membrane proteins that insert both dependently and independently of the Sec translocase complex, as well as at least some lipoproteins. The chain is Membrane protein insertase YidC 2 from Streptococcus agalactiae serotype V (strain ATCC BAA-611 / 2603 V/R).